Here is a 103-residue protein sequence, read N- to C-terminus: Putative double-stranded DNA mimic protein APJL_1366 (103 aa).

This sequence belongs to the putative dsDNA mimic protein family.

Its function is as follows. May act as a double-stranded DNA (dsDNA) mimic. Probably regulates the activity of a dsDNA-binding protein. The sequence is that of Putative double-stranded DNA mimic protein APJL_1366 from Actinobacillus pleuropneumoniae serotype 3 (strain JL03).